The chain runs to 977 residues: Zinc finger CCCH domain-containing protein 7B (977 aa).

3 TPR repeats span residues 1-27 (MERQ…KQEE), 36-69 (VQNL…ADYA), and 82-115 (CKLH…DSES). A Phosphoserine modification is found at Ser-217. Positions 248-256 (STDSLDDFS) match the LD motif; interaction with NSP3 motif. Phosphoserine occurs at positions 364 and 367. The segment at 365–403 (FGSTRGSLDKPDSFMEETNSQDHRPPSGAQKPAPSPEPC) is disordered. C3H1-type zinc fingers lie at residues 484–508 (LCKD…HQEE), 616–638 (VCRH…HSFI), and 754–782 (PQQY…HSPE). The segment at 842 to 866 (YHCWLCGKNSNSKKQWQQHIQSEKH) adopts a C2H2-type zinc-finger fold. The segment at 886–914 (MGEFRLCDRLQKGKACPDGDKCRCAHGQE) adopts a C3H1-type 4 zinc-finger fold.

As to quaternary structure, (Microbial infection) Interacts (via LD motif) with rotavirus A NSP3 (via the coiled-coil region).

Its subcellular location is the nucleus. In terms of biological role, may be a specific regulator of miRNA biogenesis. Binds to microRNAs MIR7-1, MIR16-2 and MIR29A hairpins recognizing the 'ATA(A/T)' motif in the apical loop. The chain is Zinc finger CCCH domain-containing protein 7B (ZC3H7B) from Homo sapiens (Human).